The chain runs to 761 residues: MRYNQFSYIPTKPNEAFEELKGLGFPLNKKNSDKANLEAFLRHSFLNQTDTDYALSLLIVDAKTDALTFFKSNSDLTLENLQWIYLQLLGFVPFVDFKDPKAFLQDINFPVSYDNIFQSLHHLLACRGKSGNTLIDQLVADGLLHADNHYHFFNGKSLATFNTNQLIREVVYVETSLDTMSSGEHDLVKVNIIRPTTEHTIPTMMTASPYHQGINDPAADQKTYQMEGALAVKQPKHIQVDTKPFKEEVKHPSKLPISPATESFTHIDSYSLNDYFLSRGFANIYVSGVGTAGSTGFMTSGDYQQIQSFKAVIDWLNGKVTAFTSHKRDKQVKADWSNGLVATTGKSYLGTMSTGLATTGVEGLKVIIAEAAISTWYDYYRENGLVCSPGGYPGEDLDVLTELTYSRNLLAGDYIKNNDCYQALLNEQSKAIDRQSGDYNQYWHDRNYLTHVNNVKSRVVYTHGLQDWNVKPRHVYKIFNALPQTIKKHLFLHQGQHVYMHNWQSIDFRESMNALLSQELLGIDNHFQLEEVIWQDNTTEQTWQVLDAFGGNHQEQIGLGDSKKLIDNHYDKEAFDTYCKDFNVFKNDLFKGNNKTNQITINLPLKKNYLLNGQCKLHLRVKTSDKKAILSAQILDYGPKKRFKDTPTIKFLNSLDNGKNFAREALRELPFTKDHYRVISKGVLNLQNRTDLLTIEAIDPEQWFDIEFSLQPSIYQLSKGDNLRIILYTTDFEHTIRDNASYSITVDLSQSYLTIPTNQGN.

Active-site charge relay system residues include Ser-347, Asp-467, and His-497.

This sequence belongs to the peptidase S15 family. In terms of assembly, homodimer.

The protein localises to the cytoplasm. The enzyme catalyses Hydrolyzes Xaa-Pro-|- bonds to release unblocked, N-terminal dipeptides from substrates including Ala-Pro-|-p-nitroanilide and (sequentially) Tyr-Pro-|-Phe-Pro-|-Gly-Pro-|-Ile.. Its function is as follows. Removes N-terminal dipeptides sequentially from polypeptides having unsubstituted N-termini provided that the penultimate residue is proline. The protein is Xaa-Pro dipeptidyl-peptidase of Streptococcus agalactiae serotype Ia (strain ATCC 27591 / A909 / CDC SS700).